Here is a 201-residue protein sequence, read N- to C-terminus: DeSI-like protein sdu1 (201 aa).

Positions 1–143 (MKVYINVYDL…AFPTITNALL (143 aa)) constitute a PPPDE domain. Active-site residues include H29 and C105. A disordered region spans residues 146 to 201 (GQKNTSDVDDSSDSSSDVDEETLIVSKSKKAHKDIPKFSAPPPSADLNNLITDSLP). The span at 152-167 (DVDDSSDSSSDVDEET) shows a compositional bias: acidic residues. The span at 191-201 (DLNNLITDSLP) shows a compositional bias: polar residues.

This sequence belongs to the DeSI family.

Its subcellular location is the cytoplasm. Has a role in meiosis. This Schizosaccharomyces pombe (strain 972 / ATCC 24843) (Fission yeast) protein is DeSI-like protein sdu1 (sdu1).